Consider the following 253-residue polypeptide: MSFSFSQPCPSGALLLVVVSSLLLWENVASVPLSSNETDGYPLSINGLFHNAMRLTWNIKNLNMELRKTYTVNQVSEKLYENYMLDFIEDMEYLVKALTCCHNYSIKTPENLDEAQQIPFNEFPKLILSRMWAWNETSKVLLTTLRSIPGMHDDVISLAKNIETKLAELFEYTQSILNSIYGTTTTGNVEYTVFSGLEDLKSSDEEFSLFDLCKFSYCLRVDIHMVELYLKLLECVVYVSSDVCLSKNIRDAS.

A signal peptide spans 1–30 (MSFSFSQPCPSGALLLVVVSSLLLWENVAS). 3 N-linked (GlcNAc...) asparagine glycosylation sites follow: asparagine 36, asparagine 103, and asparagine 135. Intrachain disulfides connect cysteine 101/cysteine 218 and cysteine 235/cysteine 244.

This sequence belongs to the somatotropin/prolactin family. As to expression, expression restricted to the placental tissue. Expressed only in the spongiotrophoblasts.

It is found in the secreted. This chain is Prolactin-7A2 (Prl7a2), found in Mus musculus (Mouse).